Consider the following 100-residue polypeptide: Omega-hexatoxin-Asp2b (100 aa).

The N-terminal stretch at 1 to 23 is a signal peptide; that stretch reads MKFSKLSITLAVILTQAVFVLCG. A propeptide spanning residues 24-55 is cleaved from the precursor; it reads MKNEDFMEKGLESNELHDAIKKPVNSGKPDTE. Intrachain disulfides connect Cys-60/Cys-73, Cys-66/Cys-79, and Cys-72/Cys-84.

This sequence belongs to the neurotoxin 15 family. 02 (omega-actx) subfamily. Expressed by the venom gland.

Its subcellular location is the secreted. Potent inhibitor of insect, but not mammalian, voltage-gated calcium channels (Cav). This Atrax sp. (strain Illawarra) (Funnel-web spider) protein is Omega-hexatoxin-Asp2b.